Here is a 476-residue protein sequence, read N- to C-terminus: Bifunctional protein HldE (476 aa).

The ribokinase stretch occupies residues 1–319 (MKVSLPAFEK…EALALHHGES (319 aa)). An ATP-binding site is contributed by 195 to 198 (NMSE). Aspartate 264 is an active-site residue. Residues 345–476 (MTNGCFDILH…AIIQNIMANQ (132 aa)) form a cytidylyltransferase region.

The protein in the N-terminal section; belongs to the carbohydrate kinase PfkB family. It in the C-terminal section; belongs to the cytidylyltransferase family. In terms of assembly, homodimer.

The enzyme catalyses D-glycero-beta-D-manno-heptose 7-phosphate + ATP = D-glycero-beta-D-manno-heptose 1,7-bisphosphate + ADP + H(+). It catalyses the reaction D-glycero-beta-D-manno-heptose 1-phosphate + ATP + H(+) = ADP-D-glycero-beta-D-manno-heptose + diphosphate. It functions in the pathway nucleotide-sugar biosynthesis; ADP-L-glycero-beta-D-manno-heptose biosynthesis; ADP-L-glycero-beta-D-manno-heptose from D-glycero-beta-D-manno-heptose 7-phosphate: step 1/4. The protein operates within nucleotide-sugar biosynthesis; ADP-L-glycero-beta-D-manno-heptose biosynthesis; ADP-L-glycero-beta-D-manno-heptose from D-glycero-beta-D-manno-heptose 7-phosphate: step 3/4. Functionally, catalyzes the phosphorylation of D-glycero-D-manno-heptose 7-phosphate at the C-1 position to selectively form D-glycero-beta-D-manno-heptose-1,7-bisphosphate. Catalyzes the ADP transfer from ATP to D-glycero-beta-D-manno-heptose 1-phosphate, yielding ADP-D-glycero-beta-D-manno-heptose. In Shewanella baltica (strain OS155 / ATCC BAA-1091), this protein is Bifunctional protein HldE.